The sequence spans 143 residues: Large ribosomal subunit protein uL11 (143 aa).

The protein belongs to the universal ribosomal protein uL11 family. Part of the ribosomal stalk of the 50S ribosomal subunit. Interacts with L10 and the large rRNA to form the base of the stalk. L10 forms an elongated spine to which L12 dimers bind in a sequential fashion forming a multimeric L10(L12)X complex. Post-translationally, one or more lysine residues are methylated.

Forms part of the ribosomal stalk which helps the ribosome interact with GTP-bound translation factors. The protein is Large ribosomal subunit protein uL11 of Borreliella afzelii (strain PKo) (Borrelia afzelii).